Here is a 262-residue protein sequence, read N- to C-terminus: Type III pantothenate kinase (262 aa).

6–13 (DAGNTNMV) contributes to the ATP binding site. Substrate contacts are provided by residues Tyr-100 and 107–110 (GADR). Catalysis depends on Asp-109, which acts as the Proton acceptor. Asp-129 serves as a coordination point for K(+). Position 132 (Thr-132) interacts with ATP. Thr-184 is a binding site for substrate.

It belongs to the type III pantothenate kinase family. Homodimer. The cofactor is NH4(+). K(+) is required as a cofactor.

The protein localises to the cytoplasm. The enzyme catalyses (R)-pantothenate + ATP = (R)-4'-phosphopantothenate + ADP + H(+). The protein operates within cofactor biosynthesis; coenzyme A biosynthesis; CoA from (R)-pantothenate: step 1/5. In terms of biological role, catalyzes the phosphorylation of pantothenate (Pan), the first step in CoA biosynthesis. This Clostridium tetani (strain Massachusetts / E88) protein is Type III pantothenate kinase.